Consider the following 226-residue polypeptide: ATP synthase subunit a (226 aa).

The next 6 membrane-spanning stretches (helical) occupy residues 18-38 (FITG…SLGA), 79-99 (LAGT…IPGF), 105-125 (SWSF…FEGI), 134-154 (FAHF…IEII), 179-199 (LIML…VLFF), and 201-221 (GILQ…GAVL).

This sequence belongs to the ATPase A chain family. As to quaternary structure, F-type ATPases have 2 components, CF(1) - the catalytic core - and CF(0) - the membrane proton channel. CF(1) has five subunits: alpha(3), beta(3), gamma(1), delta(1), epsilon(1). CF(0) has three main subunits: a(1), b(2) and c(9-12). The alpha and beta chains form an alternating ring which encloses part of the gamma chain. CF(1) is attached to CF(0) by a central stalk formed by the gamma and epsilon chains, while a peripheral stalk is formed by the delta and b chains.

The protein resides in the cell inner membrane. Key component of the proton channel; it plays a direct role in the translocation of protons across the membrane. The chain is ATP synthase subunit a from Helicobacter pylori (strain HPAG1).